Consider the following 165-residue polypeptide: MDIALDLQSIAVQEKTLVFPQFDAARAWALGSQLRELALARGHAVAIDVRTFGQPLFFALLDGATPDNVDWARRKGNVVAHFRRSSYAVGLRMQQAGATLADKHGLPVAEYASHGGAFPLAVAGAGVIGSVTVSGLPQRGDHELVVEALCAQLGHAYETLALARS.

This sequence belongs to the UPF0303 family.

This chain is UPF0303 protein BTH_I2506, found in Burkholderia thailandensis (strain ATCC 700388 / DSM 13276 / CCUG 48851 / CIP 106301 / E264).